A 479-amino-acid polypeptide reads, in one-letter code: GTPase Obg (479 aa).

Positions P2–V159 constitute an Obg domain. In terms of domain architecture, OBG-type G spans A160 to S340. GTP is bound by residues G166–S173, F191–V195, D212–G215, N292–D295, and S321–V323. Mg(2+) is bound by residues S173 and T193. Residues P358–P436 form the OCT domain. The segment at T438–D479 is disordered. Over residues T451 to K467 the composition is skewed to basic and acidic residues.

It belongs to the TRAFAC class OBG-HflX-like GTPase superfamily. OBG GTPase family. Monomer. It depends on Mg(2+) as a cofactor.

It is found in the cytoplasm. Its function is as follows. An essential GTPase which binds GTP, GDP and possibly (p)ppGpp with moderate affinity, with high nucleotide exchange rates and a fairly low GTP hydrolysis rate. Plays a role in control of the cell cycle, stress response, ribosome biogenesis and in those bacteria that undergo differentiation, in morphogenesis control. This Mycobacterium marinum (strain ATCC BAA-535 / M) protein is GTPase Obg.